The sequence spans 459 residues: Argininosuccinate lyase (459 aa).

It belongs to the lyase 1 family. Argininosuccinate lyase subfamily.

It localises to the cytoplasm. It carries out the reaction 2-(N(omega)-L-arginino)succinate = fumarate + L-arginine. It participates in amino-acid biosynthesis; L-arginine biosynthesis; L-arginine from L-ornithine and carbamoyl phosphate: step 3/3. The chain is Argininosuccinate lyase from Lactococcus lactis subsp. cremoris (strain SK11).